The sequence spans 131 residues: uncharacterized protein (131 aa).

2 helical membrane-spanning segments follow: residues 52-72 (LIMI…FYLV) and 97-117 (SDII…YDVG).

The protein resides in the membrane. This is an uncharacterized protein from Acanthamoeba polyphaga mimivirus (APMV).